The primary structure comprises 114 residues: DNA-directed RNA polymerase subunit Rpo4 (114 aa).

The protein belongs to the eukaryotic RPB4 RNA polymerase subunit family. As to quaternary structure, part of the 13-subunit RNA polymerase complex. Forms a stalk with Rpo7 that extends from the main structure. Post-translationally, in purified enzyme appears as 5 forms, each differing by about 200 Da of a covalently bound, negatively charged residue. Not glycosylated.

It localises to the cytoplasm. The catalysed reaction is RNA(n) + a ribonucleoside 5'-triphosphate = RNA(n+1) + diphosphate. Functionally, DNA-dependent RNA polymerase catalyzes the transcription of DNA into RNA using the four ribonucleoside triphosphates as substrates. This subunit is less well bound than the others. Probably not involved in transcription initiation. This chain is DNA-directed RNA polymerase subunit Rpo4, found in Sulfolobus acidocaldarius (strain ATCC 33909 / DSM 639 / JCM 8929 / NBRC 15157 / NCIMB 11770).